Reading from the N-terminus, the 80-residue chain is Conotoxin Ca11.3 (80 aa).

The N-terminal stretch at 1 to 19 (MKLVLAIVVILMLLSLSTG) is a signal peptide. Positions 20 to 42 (AEMSDNHASRSATALRDRLLSPK) are excised as a propeptide. Cystine bridges form between C46–C60, C53–C65, C59–C72, and C64–C79.

The protein belongs to the conotoxin I3 superfamily. Expressed by the venom duct.

It is found in the secreted. The sequence is that of Conotoxin Ca11.3 from Conus caracteristicus (Characteristic cone).